Consider the following 300-residue polypeptide: Acetaldehyde dehydrogenase (300 aa).

Serine 11–isoleucine 14 contributes to the NAD(+) binding site. Cysteine 129 serves as the catalytic Acyl-thioester intermediate. NAD(+) contacts are provided by residues serine 160 to asparagine 168 and asparagine 271.

Belongs to the acetaldehyde dehydrogenase family.

The catalysed reaction is acetaldehyde + NAD(+) + CoA = acetyl-CoA + NADH + H(+). This is Acetaldehyde dehydrogenase (mhpF) from Pseudoalteromonas translucida (strain TAC 125).